Reading from the N-terminus, the 187-residue chain is Elongation factor P (187 aa).

The protein belongs to the elongation factor P family.

Its subcellular location is the cytoplasm. Its pathway is protein biosynthesis; polypeptide chain elongation. Involved in peptide bond synthesis. Stimulates efficient translation and peptide-bond synthesis on native or reconstituted 70S ribosomes in vitro. Probably functions indirectly by altering the affinity of the ribosome for aminoacyl-tRNA, thus increasing their reactivity as acceptors for peptidyl transferase. The protein is Elongation factor P (efp) of Mycobacterium bovis (strain ATCC BAA-935 / AF2122/97).